We begin with the raw amino-acid sequence, 136 residues long: Putative pre-16S rRNA nuclease (136 aa).

The protein belongs to the YqgF nuclease family.

It localises to the cytoplasm. In terms of biological role, could be a nuclease involved in processing of the 5'-end of pre-16S rRNA. The chain is Putative pre-16S rRNA nuclease from Francisella tularensis subsp. tularensis (strain FSC 198).